The chain runs to 510 residues: NAD(P)H-quinone oxidoreductase subunit 2, chloroplastic (510 aa).

A run of 12 helical transmembrane segments spans residues 24–44, 59–79, 99–119, 124–144, 149–169, 184–204, 229–249, 295–315, 323–343, 354–374, 395–415, and 418–438; these read LLLF…GLIL, WFYF…FFRW, IFQF…VEYI, MAIT…MFLC, LITI…LSGY, LLMG…LYGL, ISIA…PAPF, WHLL…LIAL, MLAY…IVGD, YMLF…SFGL, ALSS…AGFF, and LYLF…IGLL.

The protein belongs to the complex I subunit 2 family. NDH is composed of at least 16 different subunits, 5 of which are encoded in the nucleus.

It localises to the plastid. The protein resides in the chloroplast thylakoid membrane. It catalyses the reaction a plastoquinone + NADH + (n+1) H(+)(in) = a plastoquinol + NAD(+) + n H(+)(out). The catalysed reaction is a plastoquinone + NADPH + (n+1) H(+)(in) = a plastoquinol + NADP(+) + n H(+)(out). Functionally, NDH shuttles electrons from NAD(P)H:plastoquinone, via FMN and iron-sulfur (Fe-S) centers, to quinones in the photosynthetic chain and possibly in a chloroplast respiratory chain. The immediate electron acceptor for the enzyme in this species is believed to be plastoquinone. Couples the redox reaction to proton translocation, and thus conserves the redox energy in a proton gradient. In Coelogyne cristata (Orchid), this protein is NAD(P)H-quinone oxidoreductase subunit 2, chloroplastic.